The following is a 1915-amino-acid chain: Protein NLRC5 (1915 aa).

Residues 103–137 (LGAGEESCPGPQLYHGAKRPFQSYGSSPRRKNSKK) are disordered. The NACHT domain occupies 223–542 (RVTVLLGKAG…HTVDKDTLVE (320 aa)). An ATP-binding site is contributed by 229-236 (GKAGMGKT). LRR repeat units lie at residues 622 to 646 (VAET…SFHN), 716 to 740 (MGSL…LIQT), 744 to 771 (CSQL…LLPS), 772 to 796 (LPKL…LVKV), 871 to 898 (SPQL…AASQ), 900 to 923 (HIAQ…VLKA), 930 to 953 (LEDL…PREQ), 1006 to 1033 (THNL…LLPG), 1034 to 1055 (LGPL…VFSL), 1138 to 1161 (EVQL…LPQL), 1162 to 1184 (PQLS…LLAD), 1240 to 1263 (CNAL…CLLE), 1265 to 1292 (LPQL…LLET), 1348 to 1371 (AQQL…MLLN), 1481 to 1504 (SKLL…FSQV), 1519 to 1542 (CHHL…LLMG), 1552 to 1575 (KLHL…LSRM), 1576 to 1598 (TLLQ…CLAA), 1603 to 1626 (LPEL…CLAA), 1631 to 1654 (LPEL…CLAA), 1659 to 1682 (LPEL…CLAA), 1687 to 1711 (LPEL…LVKS), 1715 to 1738 (FEHL…ELAQ), 1741 to 1768 (PPQL…ALEQ), 1769 to 1795 (CPHI…RLPL), 1821 to 1845 (FPAL…LAQV), and 1849 to 1872 (MGQL…LLAQ).

Belongs to the NLRP family. In terms of assembly, interacts with CHUK and IKBKB; prevents CHUK and IKBKB phosphorylation and inhibits their kinase activity. Interacts with RIGI and IFIH1; blocks the interaction of MAVS to RIGI. As to expression, expressed in spleen, thymus and lung.

It is found in the cytoplasm. Its function is as follows. Probable regulator of the NF-kappa-B and type I interferon signaling pathways. May also regulate the type II interferon signaling pathway. Plays a role in homeostatic control of innate immunity and in antiviral defense mechanisms. This chain is Protein NLRC5 (Nlrc5), found in Mus musculus (Mouse).